A 456-amino-acid polypeptide reads, in one-letter code: uncharacterized protein (456 aa).

One can recognise a TRAM domain in the interval 3 to 61; that stretch reads LMRKNETREFLIEDIEFPAVGVAFYNDKKVYIKGAVPGQKVLARVSKVRREKIEAKLKE. [4Fe-4S] cluster-binding residues include Cys-74, Cys-80, Cys-83, and Cys-163. The S-adenosyl-L-methionine site is built by Gln-289, Tyr-318, Glu-339, and Asp-384. Cys-411 acts as the Nucleophile in catalysis.

It belongs to the class I-like SAM-binding methyltransferase superfamily. RNA M5U methyltransferase family.

This is an uncharacterized protein from Clostridium acetobutylicum (strain ATCC 824 / DSM 792 / JCM 1419 / IAM 19013 / LMG 5710 / NBRC 13948 / NRRL B-527 / VKM B-1787 / 2291 / W).